The following is a 204-amino-acid chain: MSDLVAKTAIDRRLADIVTPVIEGMGFELVRLRLMSGKTRTLQIMADRPDGGIVVDECADISTAVSAVLDVEDPIEDNYTLEVSSPGIDRPLTRLKDFDAWAGYEARIETAELIDGRRRFKGELAGTEGDEVLITIEDGKEGFVTIGLKFDWLSDAKLILTDELIAEMLRQKKASGNFDESQFDEIQETEGEEADEAETPITRH.

Positions 177–204 are disordered; that stretch reads NFDESQFDEIQETEGEEADEAETPITRH. The span at 181–198 shows a compositional bias: acidic residues; sequence SQFDEIQETEGEEADEAE.

It belongs to the RimP family.

The protein localises to the cytoplasm. In terms of biological role, required for maturation of 30S ribosomal subunits. In Cereibacter sphaeroides (strain ATCC 17025 / ATH 2.4.3) (Rhodobacter sphaeroides), this protein is Ribosome maturation factor RimP.